We begin with the raw amino-acid sequence, 389 residues long: tRNA-specific 2-thiouridylase MnmA (389 aa).

ATP contacts are provided by residues 34-41 (AMSGGVDS) and leucine 60. The Nucleophile role is filled by cysteine 128. A disulfide bridge connects residues cysteine 128 and cysteine 225. Glycine 152 serves as a coordination point for ATP. An interaction with tRNA region spans residues 174–176 (RDQ). Cysteine 225 functions as the Cysteine persulfide intermediate in the catalytic mechanism.

The protein belongs to the MnmA/TRMU family.

It localises to the cytoplasm. It catalyses the reaction S-sulfanyl-L-cysteinyl-[protein] + uridine(34) in tRNA + AH2 + ATP = 2-thiouridine(34) in tRNA + L-cysteinyl-[protein] + A + AMP + diphosphate + H(+). Its function is as follows. Catalyzes the 2-thiolation of uridine at the wobble position (U34) of tRNA, leading to the formation of s(2)U34. This chain is tRNA-specific 2-thiouridylase MnmA, found in Paracoccus denitrificans (strain Pd 1222).